Consider the following 189-residue polypeptide: HGPRTase-like protein (189 aa).

The protein belongs to the purine/pyrimidine phosphoribosyltransferase family. Archaeal HPRT subfamily.

In terms of biological role, may catalyze a purine salvage reaction, the substrate is unknown. In Halomicrobium mukohataei (strain ATCC 700874 / DSM 12286 / JCM 9738 / NCIMB 13541) (Haloarcula mukohataei), this protein is HGPRTase-like protein.